The sequence spans 307 residues: Aspartate carbamoyltransferase catalytic subunit (307 aa).

Residues Arg-58 and Thr-59 each coordinate carbamoyl phosphate. Lys-86 lines the L-aspartate pocket. Arg-108, His-136, and Gln-139 together coordinate carbamoyl phosphate. Residues Arg-169 and Arg-223 each coordinate L-aspartate. Carbamoyl phosphate is bound by residues Gly-264 and Pro-265.

This sequence belongs to the aspartate/ornithine carbamoyltransferase superfamily. ATCase family. Heterododecamer (2C3:3R2) of six catalytic PyrB chains organized as two trimers (C3), and six regulatory PyrI chains organized as three dimers (R2).

The enzyme catalyses carbamoyl phosphate + L-aspartate = N-carbamoyl-L-aspartate + phosphate + H(+). The protein operates within pyrimidine metabolism; UMP biosynthesis via de novo pathway; (S)-dihydroorotate from bicarbonate: step 2/3. Functionally, catalyzes the condensation of carbamoyl phosphate and aspartate to form carbamoyl aspartate and inorganic phosphate, the committed step in the de novo pyrimidine nucleotide biosynthesis pathway. The chain is Aspartate carbamoyltransferase catalytic subunit from Syntrophus aciditrophicus (strain SB).